Reading from the N-terminus, the 77-residue chain is Translation initiation factor IF-1, chloroplastic (77 aa).

In terms of domain architecture, S1-like spans 1-71 (MKEQKWIHEG…TRGRIIYRLR (71 aa)).

Belongs to the IF-1 family. In terms of assembly, component of the 30S ribosomal translation pre-initiation complex which assembles on the 30S ribosome in the order IF-2 and IF-3, IF-1 and N-formylmethionyl-tRNA(fMet); mRNA recruitment can occur at any time during PIC assembly.

The protein localises to the plastid. Its subcellular location is the chloroplast. Its function is as follows. One of the essential components for the initiation of protein synthesis. Stabilizes the binding of IF-2 and IF-3 on the 30S subunit to which N-formylmethionyl-tRNA(fMet) subsequently binds. Helps modulate mRNA selection, yielding the 30S pre-initiation complex (PIC). Upon addition of the 50S ribosomal subunit IF-1, IF-2 and IF-3 are released leaving the mature 70S translation initiation complex. This Daucus carota (Wild carrot) protein is Translation initiation factor IF-1, chloroplastic.